The sequence spans 383 residues: Putative glutamate--cysteine ligase 2-2 (383 aa).

The protein belongs to the glutamate--cysteine ligase type 2 family. YbdK subfamily.

It carries out the reaction L-cysteine + L-glutamate + ATP = gamma-L-glutamyl-L-cysteine + ADP + phosphate + H(+). Its function is as follows. ATP-dependent carboxylate-amine ligase which exhibits weak glutamate--cysteine ligase activity. This is Putative glutamate--cysteine ligase 2-2 from Legionella pneumophila (strain Paris).